Consider the following 99-residue polypeptide: Protein Tat (99 aa).

The interval 1-20 (MEPVDPNIEPWNQPGSQPKT) is disordered. The interaction with human CREBBP stretch occupies residues 1–24 (MEPVDPNIEPWNQPGSQPKTACNQ). Residues 1-48 (MEPVDPNIEPWNQPGSQPKTACNQCYCKKCCYHCQLCFLQKGLGICYG) form a transactivation region. C22, C25, and C27 together coordinate Zn(2+). The interval 22 to 37 (CNQCYCKKCCYHCQLC) is cysteine-rich. N6-acetyllysine; by host PCAF is present on K28. C30, H33, C34, and C37 together coordinate Zn(2+). The core stretch occupies residues 38 to 48 (FLQKGLGICYG). The Nuclear localization signal, RNA-binding (TAR), and protein transduction motif lies at 49–57 (REKRRQRTT). An interaction with the host capping enzyme RNGTT region spans residues 49–86 (REKRRQRTTTPYASKNHKDPIPKQPLPQARGDPTGPKE). K51 is subject to N6-acetyllysine; by host EP300 and GCN5L2. Asymmetric dimethylarginine; by host PRMT6 is present on residues R52 and R53. Residues 54–99 (QRTTTPYASKNHKDPIPKQPLPQARGDPTGPKESKKEVESKTKTDP) are disordered. K71 is covalently cross-linked (Glycyl lysine isopeptide (Lys-Gly) (interchain with G-Cter in ubiquitin)). Positions 78 to 80 (RGD) match the Cell attachment site motif. The span at 83–99 (GPKESKKEVESKTKTDP) shows a compositional bias: basic and acidic residues.

This sequence belongs to the lentiviruses Tat family. Interacts with host CCNT1. Associates with the P-TEFb complex composed at least of Tat, P-TEFb (CDK9 and CCNT1), TAR RNA, RNA Pol II. Recruits the HATs CREBBP, TAF1/TFIID, EP300, PCAF and GCN5L2. Interacts with host KAT5/Tip60; this interaction targets the latter to degradation. Interacts with the host deacetylase SIRT1. Interacts with host capping enzyme RNGTT; this interaction stimulates RNGTT. Binds to host KDR, and to the host integrins ITGAV/ITGB3 and ITGA5/ITGB1. Interacts with host KPNB1/importin beta-1 without previous binding to KPNA1/importin alpha-1. Interacts with EIF2AK2. Interacts with host nucleosome assembly protein NAP1L1; this interaction may be required for the transport of Tat within the nucleus, since the two proteins interact at the nuclear rim. Interacts with host C1QBP/SF2P32; this interaction involves lysine-acetylated Tat. Interacts with the host chemokine receptors CCR2, CCR3 and CXCR4. Interacts with host DPP4/CD26; this interaction may trigger an anti-proliferative effect. Interacts with host LDLR. Interacts with the host extracellular matrix metalloproteinase MMP1. Interacts with host PRMT6; this interaction mediates Tat's methylation. Interacts with, and is ubiquitinated by MDM2/Hdm2. Interacts with host PSMC3 and HTATIP2. Interacts with STAB1; this interaction may overcome SATB1-mediated repression of IL2 and IL2RA (interleukin) in T cells by binding to the same domain than HDAC1. Interacts (when acetylated) with human CDK13, thereby increasing HIV-1 mRNA splicing and promoting the production of the doubly spliced HIV-1 protein Nef. Interacts with host TBP; this interaction modulates the activity of transcriptional pre-initiation complex. Interacts with host RELA. Interacts with host PLSCR1; this interaction negatively regulates Tat transactivation activity by altering its subcellular distribution. Asymmetrical arginine methylation by host PRMT6 seems to diminish the transactivation capacity of Tat and affects the interaction with host CCNT1. In terms of processing, acetylation by EP300, CREBBP, GCN5L2/GCN5 and PCAF regulates the transactivation activity of Tat. EP300-mediated acetylation of Lys-50 promotes dissociation of Tat from the TAR RNA through the competitive binding to PCAF's bromodomain. In addition, the non-acetylated Tat's N-terminus can also interact with PCAF. PCAF-mediated acetylation of Lys-28 enhances Tat's binding to CCNT1. Lys-50 is deacetylated by SIRT1. Post-translationally, polyubiquitination by host MDM2 does not target Tat to degradation, but activates its transactivation function and fosters interaction with CCNT1 and TAR RNA. Phosphorylated by EIF2AK2 on serine and threonine residues adjacent to the basic region important for TAR RNA binding and function. Phosphorylation of Tat by EIF2AK2 is dependent on the prior activation of EIF2AK2 by dsRNA.

The protein localises to the host nucleus. It localises to the host nucleolus. It is found in the host cytoplasm. Its subcellular location is the secreted. Functionally, transcriptional activator that increases RNA Pol II processivity, thereby increasing the level of full-length viral transcripts. Recognizes a hairpin structure at the 5'-LTR of the nascent viral mRNAs referred to as the transactivation responsive RNA element (TAR) and recruits the cyclin T1-CDK9 complex (P-TEFb complex) that will in turn hyperphosphorylate the RNA polymerase II to allow efficient elongation. The CDK9 component of P-TEFb and other Tat-activated kinases hyperphosphorylate the C-terminus of RNA Pol II that becomes stabilized and much more processive. Other factors such as HTATSF1/Tat-SF1, SUPT5H/SPT5, and HTATIP2 are also important for Tat's function. Besides its effect on RNA Pol II processivity, Tat induces chromatin remodeling of proviral genes by recruiting the histone acetyltransferases (HATs) CREBBP, EP300 and PCAF to the chromatin. This also contributes to the increase in proviral transcription rate, especially when the provirus integrates in transcriptionally silent region of the host genome. To ensure maximal activation of the LTR, Tat mediates nuclear translocation of NF-kappa-B by interacting with host RELA. Through its interaction with host TBP, Tat may also modulate transcription initiation. Tat can reactivate a latently infected cell by penetrating in it and transactivating its LTR promoter. In the cytoplasm, Tat is thought to act as a translational activator of HIV-1 mRNAs. Its function is as follows. Extracellular circulating Tat can be endocytosed by surrounding uninfected cells via the binding to several surface receptors such as CD26, CXCR4, heparan sulfate proteoglycans (HSPG) or LDLR. Neurons are rarely infected, but they internalize Tat via their LDLR. Through its interaction with nuclear HATs, Tat is potentially able to control the acetylation-dependent cellular gene expression. Modulates the expression of many cellular genes involved in cell survival, proliferation or in coding for cytokines or cytokine receptors. Tat plays a role in T-cell and neurons apoptosis. Tat induced neurotoxicity and apoptosis probably contribute to neuroAIDS. Circulating Tat also acts as a chemokine-like and/or growth factor-like molecule that binds to specific receptors on the surface of the cells, affecting many cellular pathways. In the vascular system, Tat binds to ITGAV/ITGB3 and ITGA5/ITGB1 integrins dimers at the surface of endothelial cells and competes with bFGF for heparin-binding sites, leading to an excess of soluble bFGF. This chain is Protein Tat, found in Homo sapiens (Human).